The following is a 462-amino-acid chain: Sensor histidine kinase RegB (462 aa).

At 1–25 (MILGPDGILNRDTRGDWVRLRTLIL) the chain is on the cytoplasmic side. The helical transmembrane segment at 26–45 (LRWMAVAGQLAAIVVTDWYL) threads the bilayer. Topologically, residues 46 to 51 (GVRLPM) are extracellular. Residues 52-70 (GLCFMAVGASVIANVIATF) form a helical membrane-spanning segment. At 71-78 (VFPQNRRL) the chain is on the cytoplasmic side. A helical membrane pass occupies residues 79–96 (TEFQALMILLFDLTQLSF). The Extracellular segment spans residues 97–103 (LLFLTGG). The helical transmembrane segment at 104 to 123 (LTNPFALLILAPVTISALAL) threads the bilayer. Residues 124-129 (ELRTTV) are Cytoplasmic-facing. The chain crosses the membrane as a helical span at residues 130–149 (ILGAIAIGLLTFTAYFHLPL). At 150–164 (ILADGSSLSVPRMFE) the chain is on the extracellular side. A helical transmembrane segment spans residues 165 to 182 (FGFWLAIVIGILFLGLYS). The Cytoplasmic portion of the chain corresponds to 183 to 462 (RRVAIEIRSM…PLGENVLIQT (280 aa)). In terms of domain architecture, Histidine kinase spans 218 to 445 (AAAHELGTPL…IVEVIWPVDR (228 aa)). Phosphohistidine; by autocatalysis is present on histidine 221.

Its subcellular location is the cell inner membrane. The enzyme catalyses ATP + protein L-histidine = ADP + protein N-phospho-L-histidine.. Member of the two-component regulatory system RegB/RegA. Involved in the positive regulation of photosynthesis gene expression in response to anaerobiosis. Also involved in positive regulation of the cbbI and cbbII Calvin cycle CO2 fixation operons, as well as in regulation of expression of genes involved in alternative CO2 fixation pathways. Phosphorylates RegA/PrrA. The sequence is that of Sensor histidine kinase RegB (regB) from Cereibacter sphaeroides (strain ATCC 17023 / DSM 158 / JCM 6121 / CCUG 31486 / LMG 2827 / NBRC 12203 / NCIMB 8253 / ATH 2.4.1.) (Rhodobacter sphaeroides).